The sequence spans 436 residues: GTPase Der (436 aa).

2 consecutive EngA-type G domains span residues 4 to 167 and 175 to 351; these read PTVA…PVEE and IRFS…ESQN. Residues 10 to 17, 57 to 61, 119 to 122, 181 to 188, 229 to 233, and 294 to 297 contribute to the GTP site; these read GRPNVGKS, DTGGI, NKVD, DTAGM, and NKWD. The region spanning 352 to 436 is the KH-like domain; it reads KRIPSAVLND…PIHLIARKRK (85 aa).

It belongs to the TRAFAC class TrmE-Era-EngA-EngB-Septin-like GTPase superfamily. EngA (Der) GTPase family. In terms of assembly, associates with the 50S ribosomal subunit.

In terms of biological role, GTPase that plays an essential role in the late steps of ribosome biogenesis. The sequence is that of GTPase Der from Streptococcus pyogenes serotype M3 (strain ATCC BAA-595 / MGAS315).